The following is a 313-amino-acid chain: Phenylalanine-4-hydroxylase (313 aa).

3 residues coordinate Fe cation: histidine 154, histidine 159, and glutamate 200.

The protein belongs to the biopterin-dependent aromatic amino acid hydroxylase family. It depends on Fe(2+) as a cofactor.

It catalyses the reaction (6R)-L-erythro-5,6,7,8-tetrahydrobiopterin + L-phenylalanine + O2 = (4aS,6R)-4a-hydroxy-L-erythro-5,6,7,8-tetrahydrobiopterin + L-tyrosine. It functions in the pathway amino-acid degradation; L-phenylalanine degradation; acetoacetate and fumarate from L-phenylalanine: step 1/6. The polypeptide is Phenylalanine-4-hydroxylase (phhA) (Ralstonia nicotianae (strain ATCC BAA-1114 / GMI1000) (Ralstonia solanacearum)).